A 344-amino-acid polypeptide reads, in one-letter code: Lipase chaperone (344 aa).

The helical transmembrane segment at 14-34 threads the bilayer; the sequence is VAVYGAVGLAAIAGVAIWSGA.

This sequence belongs to the lipase chaperone family.

The protein resides in the cell inner membrane. In terms of biological role, may be involved in the folding of the extracellular lipase during its passage through the periplasm. This chain is Lipase chaperone, found in Burkholderia ambifaria (strain MC40-6).